The following is a 463-amino-acid chain: Asparagine--tRNA ligase (463 aa).

Belongs to the class-II aminoacyl-tRNA synthetase family. Homodimer.

Its subcellular location is the cytoplasm. The catalysed reaction is tRNA(Asn) + L-asparagine + ATP = L-asparaginyl-tRNA(Asn) + AMP + diphosphate + H(+). The protein is Asparagine--tRNA ligase of Alkaliphilus oremlandii (strain OhILAs) (Clostridium oremlandii (strain OhILAs)).